The sequence spans 287 residues: Glucose import system permease protein GlcU (287 aa).

Helical transmembrane passes span His14–Ile34, Ile76–Phe96, Val113–Leu133, Ile149–Ile169, Ile194–Ala214, Phe218–Leu238, and Asp250–Gly270. An ABC transmembrane type-1 domain is found at Leu71–Leu269.

The protein belongs to the binding-protein-dependent transport system permease family. As to quaternary structure, the complex is composed of two ATP-binding proteins (GlcV), two transmembrane proteins (GlcT and GlcU) and a solute-binding protein (GlcS).

It is found in the cell membrane. Part of the ABC transporter complex GlcSTUV involved in glucose uptake. Responsible for the translocation of the substrate across the membrane. In Saccharolobus solfataricus (strain ATCC 35092 / DSM 1617 / JCM 11322 / P2) (Sulfolobus solfataricus), this protein is Glucose import system permease protein GlcU.